The following is a 78-amino-acid chain: Pigment-dispersing hormone 1 peptides (78 aa).

Residues 1-22 (MRSSVIVAVLVVVALAALLTQG) form the signal peptide. Alanine 75 carries the alanine amide modification.

The protein belongs to the arthropod PDH family. In terms of tissue distribution, eyestalk sinus gland.

It localises to the secreted. Its function is as follows. The pigment-dispersing hormone causes the migration of the distal retinal pigment into the proximal end of the pigment chromatophore cells and thus decreases the amount of light entering the retinulas. May also function as a neurotransmitter and/or neuromodulator. The sequence is that of Pigment-dispersing hormone 1 peptides (PDH1) from Callinectes sapidus (Blue crab).